We begin with the raw amino-acid sequence, 122 residues long: Small ribosomal subunit protein uS13 (122 aa).

The disordered stretch occupies residues 95-122 (GLPVRGQRTKTNARTRKGPKKTIAGKKK).

The protein belongs to the universal ribosomal protein uS13 family. In terms of assembly, part of the 30S ribosomal subunit. Forms a loose heterodimer with protein S19. Forms two bridges to the 50S subunit in the 70S ribosome.

Its function is as follows. Located at the top of the head of the 30S subunit, it contacts several helices of the 16S rRNA. In the 70S ribosome it contacts the 23S rRNA (bridge B1a) and protein L5 of the 50S subunit (bridge B1b), connecting the 2 subunits; these bridges are implicated in subunit movement. Contacts the tRNAs in the A and P-sites. The protein is Small ribosomal subunit protein uS13 of Corynebacterium diphtheriae (strain ATCC 700971 / NCTC 13129 / Biotype gravis).